The sequence spans 386 residues: Methionine aminopeptidase 1 (386 aa).

Ala-2 is modified (N-acetylalanine). The C6H2-type zinc finger occupies 6–59 (TRVCETDGCSSEAKLQCPTCIKLGIQGSYFCSQECFKGSWATHKLLHKKAKDEK). Zn(2+)-binding residues include Cys-9, Cys-14, Cys-22, Cys-25, Cys-36, Cys-40, His-48, and His-52. His-203 is an a protein binding site. Zn(2+)-binding residues include Asp-220, Asp-231, and His-294. His-301 contributes to the a protein binding site. Zn(2+)-binding residues include Glu-327 and Glu-358.

Belongs to the peptidase M24A family. Methionine aminopeptidase type 1 subfamily. In terms of assembly, associates with the 60S ribosomal subunit of the 80S translational complex. The cofactor is Zn(2+). Co(2+) is required as a cofactor. It depends on Mn(2+) as a cofactor. Requires Fe(2+) as cofactor.

It localises to the cytoplasm. It catalyses the reaction Release of N-terminal amino acids, preferentially methionine, from peptides and arylamides.. Cotranslationally removes the N-terminal methionine from nascent proteins. The N-terminal methionine is often cleaved when the second residue in the primary sequence is small and uncharged (Met-Ala-, Cys, Gly, Pro, Ser, Thr, or Val). The polypeptide is Methionine aminopeptidase 1 (METAP1) (Pongo abelii (Sumatran orangutan)).